A 46-amino-acid chain; its full sequence is Large ribosomal subunit protein bL34 (46 aa).

This sequence belongs to the bacterial ribosomal protein bL34 family.

This is Large ribosomal subunit protein bL34 (rpmH) from Mycobacterium avium.